The chain runs to 159 residues: 2-C-methyl-D-erythritol 2,4-cyclodiphosphate synthase (159 aa).

2 residues coordinate a divalent metal cation: Asp10 and His12. Residues 10 to 12 (DVH) and 37 to 38 (HS) contribute to the 4-CDP-2-C-methyl-D-erythritol 2-phosphate site. His45 is a binding site for a divalent metal cation. Residues 59–61 (DIG), 64–68 (FLDTD), 103–109 (AQAPKML), 135–138 (TTTE), Phe142, and Arg145 each bind 4-CDP-2-C-methyl-D-erythritol 2-phosphate.

The protein belongs to the IspF family. Homotrimer. Requires a divalent metal cation as cofactor.

It catalyses the reaction 4-CDP-2-C-methyl-D-erythritol 2-phosphate = 2-C-methyl-D-erythritol 2,4-cyclic diphosphate + CMP. It functions in the pathway isoprenoid biosynthesis; isopentenyl diphosphate biosynthesis via DXP pathway; isopentenyl diphosphate from 1-deoxy-D-xylulose 5-phosphate: step 4/6. Functionally, involved in the biosynthesis of isopentenyl diphosphate (IPP) and dimethylallyl diphosphate (DMAPP), two major building blocks of isoprenoid compounds. Catalyzes the conversion of 4-diphosphocytidyl-2-C-methyl-D-erythritol 2-phosphate (CDP-ME2P) to 2-C-methyl-D-erythritol 2,4-cyclodiphosphate (ME-CPP) with a corresponding release of cytidine 5-monophosphate (CMP). This Francisella tularensis subsp. tularensis (strain FSC 198) protein is 2-C-methyl-D-erythritol 2,4-cyclodiphosphate synthase.